We begin with the raw amino-acid sequence, 197 residues long: TDAXNPPEGPQDRGSQQKGRLSLQNTAEIQHCLVNAGDVGCGVFECFENNXCXIXXLHXISFIKAHALRFGCISREMVFQLQRECYLKHDLCMINFRDLLLHEPYVDLVNLLLTCGEDVKEAVTRSIQAQCEQNWGGLCSILSFCTSNVQRPXAXQPXADRAQVSRPHHHDTGHHLLEAIXGAKGERGSKSHPSVRA.

Positions 1–20 (TDAXNPPEGPQDRGSQQKGR) are disordered.

Belongs to the stanniocalcin family. As to quaternary structure, homodimer; disulfide-linked.

Its subcellular location is the secreted. Its function is as follows. Has an anti-hypocalcemic action on calcium and phosphate homeostasis. The polypeptide is Stanniocalcin-2 (STC2) (Cavia porcellus (Guinea pig)).